We begin with the raw amino-acid sequence, 311 residues long: tRNA-cytidine(32) 2-sulfurtransferase (311 aa).

The PP-loop motif motif lies at 47–52; the sequence is SGGKDS. The [4Fe-4S] cluster site is built by cysteine 122, cysteine 125, and cysteine 213.

Belongs to the TtcA family. In terms of assembly, homodimer. Mg(2+) is required as a cofactor. It depends on [4Fe-4S] cluster as a cofactor.

The protein localises to the cytoplasm. The enzyme catalyses cytidine(32) in tRNA + S-sulfanyl-L-cysteinyl-[cysteine desulfurase] + AH2 + ATP = 2-thiocytidine(32) in tRNA + L-cysteinyl-[cysteine desulfurase] + A + AMP + diphosphate + H(+). The protein operates within tRNA modification. Functionally, catalyzes the ATP-dependent 2-thiolation of cytidine in position 32 of tRNA, to form 2-thiocytidine (s(2)C32). The sulfur atoms are provided by the cysteine/cysteine desulfurase (IscS) system. The protein is tRNA-cytidine(32) 2-sulfurtransferase of Escherichia coli O157:H7.